The following is a 154-amino-acid chain: Small heat shock protein C2 (154 aa).

Residues 43–154 (STEKNLIPRT…GKTRKIEVKG (112 aa)) enclose the sHSP domain.

It belongs to the small heat shock protein (HSP20) family.

In Rickettsia felis (strain ATCC VR-1525 / URRWXCal2) (Rickettsia azadi), this protein is Small heat shock protein C2 (hspC2).